Reading from the N-terminus, the 550-residue chain is Hydroxylamine reductase (550 aa).

Positions 3, 6, 18, and 25 each coordinate [2Fe-2S] cluster. 8 residues coordinate hybrid [4Fe-2O-2S] cluster: His249, Glu273, Cys317, Cys405, Cys433, Cys458, Glu492, and Lys494. Cys405 is subject to Cysteine persulfide.

This sequence belongs to the HCP family. [2Fe-2S] cluster is required as a cofactor. The cofactor is hybrid [4Fe-2O-2S] cluster.

It localises to the cytoplasm. It catalyses the reaction A + NH4(+) + H2O = hydroxylamine + AH2 + H(+). Catalyzes the reduction of hydroxylamine to form NH(3) and H(2)O. The chain is Hydroxylamine reductase from Salmonella typhimurium (strain LT2 / SGSC1412 / ATCC 700720).